Consider the following 241-residue polypeptide: Guanosine phosphorylase (241 aa).

Belongs to the PNP/UDP phosphorylase family.

The enzyme catalyses guanosine + phosphate = alpha-D-ribose 1-phosphate + guanine. It carries out the reaction a purine D-ribonucleoside + phosphate = a purine nucleobase + alpha-D-ribose 1-phosphate. It catalyses the reaction inosine + phosphate = alpha-D-ribose 1-phosphate + hypoxanthine. The catalysed reaction is adenosine + phosphate = alpha-D-ribose 1-phosphate + adenine. Activity is higher at low KCl concentrations. Phosphorylase involved in the non-carboxylating pentose bisphosphate pathway, a nucleoside degradation pathway present in some halophilic archaea. Catalyzes the phosphorolytic cleavage of guanosine to guanine and ribose-1-phosphate (R1P). Exhibits the highest activity toward guanosine, but also shows lower activity against inosine and adenosine. This chain is Guanosine phosphorylase, found in Halorubrum lacusprofundi (strain ATCC 49239 / DSM 5036 / JCM 8891 / ACAM 34).